Reading from the N-terminus, the 164-residue chain is MINHFDLKKVPPSIKEDFSEILKIINQCFSSHFKVKNNLFYELSFVSEKQSLQLNSSLRNKEYVADIISVCLWENAEIITPLLGEIFICSKKIAKDAIKYDVNFWYLLIRMIIHGLLHLLEFDHEQSDAYEYVTLTIQEQIVNKVIKTAKKKIWKNQELLSLLG.

The Zn(2+) site is built by His-114, His-118, and His-124.

This sequence belongs to the endoribonuclease YbeY family. It depends on Zn(2+) as a cofactor.

It localises to the cytoplasm. Functionally, single strand-specific metallo-endoribonuclease involved in late-stage 70S ribosome quality control and in maturation of the 3' terminus of the 16S rRNA. This Mycoplasmoides gallisepticum (strain R(low / passage 15 / clone 2)) (Mycoplasma gallisepticum) protein is Endoribonuclease YbeY.